The primary structure comprises 338 residues: MGRELVDKHMDKKANSLTASSTGSSDDNKVPSPSTNEAAEVKECTEQNLVADDARLRQQGITETPGSHKSSVKPRVTAKTTVPKPFSLSAEKPRRAAVDNNSLGNGASHNSSSASRVSQLNSPLPTRRIPDHKMHHDEEDSFSVASSSATSIRSFKPKITIGVAPTFSSTSRLERRREFYQKLEEKQKALEAEKRENEKRLKEEQEAVTKQLRKNMAYKANPVPSFYQEGPPPKQPLKKFPLTRPKSPNLNRRKSCSDTVNASYQEVKGKHCARHRHSVGGCKDEVKTNSVPRTPNSSSKDQMRKSKKGTPKSEEVHEMFNSGHDGETGENGVGVVEE.

A compositionally biased stretch (basic and acidic residues) spans 1-14 (MGRELVDKHMDKKA). Residues 1–150 (MGRELVDKHM…SFSVASSSAT (150 aa)) are disordered. Polar residues-rich tracts occupy residues 15-37 (NSLT…STNE) and 59-69 (QGITETPGSHK). Low complexity predominate over residues 100-115 (NNSLGNGASHNSSSAS). Residues 128-138 (RIPDHKMHHDE) are compositionally biased toward basic and acidic residues. The stretch at 177 to 214 (REFYQKLEEKQKALEAEKRENEKRLKEEQEAVTKQLRK) forms a coiled coil. A disordered region spans residues 222–338 (PVPSFYQEGP…GENGVGVVEE (117 aa)). The segment covering 288–300 (TNSVPRTPNSSSK) has biased composition (polar residues).

The protein belongs to the TPX2 family. As to expression, expressed in seedlings.

Its subcellular location is the cytoplasm. The protein localises to the cytoskeleton. Functionally, microtubule-associated protein (MAP) that regulates the orientation of interphase cortical microtubules. The sequence is that of Protein WVD2-like 2 from Arabidopsis thaliana (Mouse-ear cress).